The chain runs to 113 residues: Large ribosomal subunit protein uL22 (113 aa).

Belongs to the universal ribosomal protein uL22 family. In terms of assembly, part of the 50S ribosomal subunit.

In terms of biological role, this protein binds specifically to 23S rRNA; its binding is stimulated by other ribosomal proteins, e.g. L4, L17, and L20. It is important during the early stages of 50S assembly. It makes multiple contacts with different domains of the 23S rRNA in the assembled 50S subunit and ribosome. Functionally, the globular domain of the protein is located near the polypeptide exit tunnel on the outside of the subunit, while an extended beta-hairpin is found that lines the wall of the exit tunnel in the center of the 70S ribosome. The polypeptide is Large ribosomal subunit protein uL22 (Oceanobacillus iheyensis (strain DSM 14371 / CIP 107618 / JCM 11309 / KCTC 3954 / HTE831)).